A 481-amino-acid polypeptide reads, in one-letter code: Glutamate--tRNA ligase (481 aa).

A 'HIGH' region motif is present at residues 9-19 (PSPTGNLHIGT). The Zn(2+) site is built by C98, C100, H125, and D127. The 'KMSKS' region motif lies at 248–252 (KLSKR). An ATP-binding site is contributed by K251.

It belongs to the class-I aminoacyl-tRNA synthetase family. Glutamate--tRNA ligase type 1 subfamily. In terms of assembly, monomer. Zn(2+) is required as a cofactor.

It is found in the cytoplasm. The catalysed reaction is tRNA(Glu) + L-glutamate + ATP = L-glutamyl-tRNA(Glu) + AMP + diphosphate. Catalyzes the attachment of glutamate to tRNA(Glu) in a two-step reaction: glutamate is first activated by ATP to form Glu-AMP and then transferred to the acceptor end of tRNA(Glu). The protein is Glutamate--tRNA ligase of Synechococcus elongatus (strain ATCC 33912 / PCC 7942 / FACHB-805) (Anacystis nidulans R2).